The following is a 76-amino-acid chain: Large ribosomal subunit protein uL29 (76 aa).

Belongs to the universal ribosomal protein uL29 family.

In Corynebacterium kroppenstedtii (strain DSM 44385 / JCM 11950 / CIP 105744 / CCUG 35717), this protein is Large ribosomal subunit protein uL29.